Consider the following 274-residue polypeptide: Large ribosomal subunit protein uL2cz/uL2cy (274 aa).

Disordered regions lie at residues Met1–Lys23 and Met223–Lys274. Over residues Lys7–Lys23 the composition is skewed to polar residues.

This sequence belongs to the universal ribosomal protein uL2 family. Part of the 50S ribosomal subunit.

It is found in the plastid. The protein localises to the chloroplast. This is Large ribosomal subunit protein uL2cz/uL2cy (rpl2-A) from Nandina domestica (Heavenly bamboo).